Reading from the N-terminus, the 59-residue chain is Small, acid-soluble spore protein H (59 aa).

It belongs to the SspH family.

It localises to the spore core. This is Small, acid-soluble spore protein H from Bacillus licheniformis (strain ATCC 14580 / DSM 13 / JCM 2505 / CCUG 7422 / NBRC 12200 / NCIMB 9375 / NCTC 10341 / NRRL NRS-1264 / Gibson 46).